Consider the following 409-residue polypeptide: MVSTPEIKNQLARPDALGRFGKFGGKYVPETLMPALGELETAYQKYRDDASYQTELQNLLRDYVGRPSPLYFAERLTEYYARPDGTGAQIYLKREDLNHTGAHKINNALAQVLLAKRIGKQRVIAETGAGQHGVATATVCARFGLDCVIYMGIHDMERQALNVFRMKLMGAEVRPVEAGTGTLKDATSEAIRDWVTNVETTHYILGSVAGPHPYPMIVRDFHAIIGKETRVQCQEKWGGLPDILLACVGGGSNAIGLFHEFIDEPSIRLIGVEAAGEGVDTDKHAATLTLGRVGVLHGAMSYLLQDEDGQVIEAHSISAGLDYPGVGPEHSYLKDIRRAEYYSVTDKQALDGFQQLSRLEGIIPALETSHAIAYLETLCPQLNGSPRIVINCSGRGDKDVQTVAKVLNY.

Position 104 is an N6-(pyridoxal phosphate)lysine (Lys-104).

The protein belongs to the TrpB family. Tetramer of two alpha and two beta chains. The cofactor is pyridoxal 5'-phosphate.

The catalysed reaction is (1S,2R)-1-C-(indol-3-yl)glycerol 3-phosphate + L-serine = D-glyceraldehyde 3-phosphate + L-tryptophan + H2O. The protein operates within amino-acid biosynthesis; L-tryptophan biosynthesis; L-tryptophan from chorismate: step 5/5. In terms of biological role, the beta subunit is responsible for the synthesis of L-tryptophan from indole and L-serine. In Nostoc sp. (strain PCC 7120 / SAG 25.82 / UTEX 2576), this protein is Tryptophan synthase beta chain 1 (trpB1).